A 187-amino-acid chain; its full sequence is GTP cyclohydrolase 1 (187 aa).

Zn(2+)-binding residues include C74, H77, and C145.

It belongs to the GTP cyclohydrolase I family. Homomer.

It catalyses the reaction GTP + H2O = 7,8-dihydroneopterin 3'-triphosphate + formate + H(+). It functions in the pathway cofactor biosynthesis; 7,8-dihydroneopterin triphosphate biosynthesis; 7,8-dihydroneopterin triphosphate from GTP: step 1/1. The protein is GTP cyclohydrolase 1 of Sulfurihydrogenibium sp. (strain YO3AOP1).